The sequence spans 313 residues: Ornithine carbamoyltransferase (313 aa).

Carbamoyl phosphate is bound by residues 57-60 (STRT), Arg108, and 135-138 (HPTQ). Residues Asn167, Asp231, and 235-236 (SM) contribute to the L-ornithine site. Carbamoyl phosphate-binding positions include 272–273 (CL) and Arg300.

This sequence belongs to the aspartate/ornithine carbamoyltransferase superfamily. OTCase family.

The protein localises to the cytoplasm. It catalyses the reaction carbamoyl phosphate + L-ornithine = L-citrulline + phosphate + H(+). Its pathway is amino-acid biosynthesis; L-arginine biosynthesis; L-arginine from L-ornithine and carbamoyl phosphate: step 1/3. Functionally, reversibly catalyzes the transfer of the carbamoyl group from carbamoyl phosphate (CP) to the N(epsilon) atom of ornithine (ORN) to produce L-citrulline. In Thermotoga petrophila (strain ATCC BAA-488 / DSM 13995 / JCM 10881 / RKU-1), this protein is Ornithine carbamoyltransferase.